We begin with the raw amino-acid sequence, 158 residues long: Transcription elongation factor GreA (158 aa).

The protein belongs to the GreA/GreB family.

Its function is as follows. Necessary for efficient RNA polymerase transcription elongation past template-encoded arresting sites. The arresting sites in DNA have the property of trapping a certain fraction of elongating RNA polymerases that pass through, resulting in locked ternary complexes. Cleavage of the nascent transcript by cleavage factors such as GreA or GreB allows the resumption of elongation from the new 3'terminus. GreA releases sequences of 2 to 3 nucleotides. The chain is Transcription elongation factor GreA from Wigglesworthia glossinidia brevipalpis.